Here is a 293-residue protein sequence, read N- to C-terminus: 33 kDa chaperonin (293 aa).

2 disulfide bridges follow: Cys-231–Cys-233 and Cys-264–Cys-267.

The protein belongs to the HSP33 family. Post-translationally, under oxidizing conditions two disulfide bonds are formed involving the reactive cysteines. Under reducing conditions zinc is bound to the reactive cysteines and the protein is inactive.

It is found in the cytoplasm. In terms of biological role, redox regulated molecular chaperone. Protects both thermally unfolding and oxidatively damaged proteins from irreversible aggregation. Plays an important role in the bacterial defense system toward oxidative stress. The protein is 33 kDa chaperonin of Yersinia pseudotuberculosis serotype O:1b (strain IP 31758).